The sequence spans 94 residues: Dynein light chain, cytoplasmic (94 aa).

Belongs to the dynein light chain family. Homodimer. Cytoplasmic dynein consists of two catalytic heavy chains (HCs) and a number of non-catalytic subunits which present intermediate chains (ICs), light intermediate chains (LICs) and light chains (LCs). Component of the nuclear pore complex (NPC). The nuclear pore complex constitutes the exclusive means of nucleocytoplasmic transport. NPCs allow the passive diffusion of ions and small molecules and the active, nuclear transport receptor-mediated bidirectional transport of macromolecules such as proteins, RNAs, ribonucleoparticles (RNPs), and ribosomal subunits across the nuclear envelope. Due to its 8-fold rotational symmetry, all subunits are present with 8 copies or multiples thereof.

Its subcellular location is the cytoplasm. It is found in the cytoskeleton. The protein resides in the nucleus. The protein localises to the nuclear pore complex. Functionally, acts as one of several non-catalytic accessory components of the cytoplasmic dynein complex that are thought to be involved in linking dynein to cargos and to adapter proteins that regulate dynein function. Cytoplasmic dynein 1 acts as a motor for the intracellular retrograde motility of vesicles and organelles along microtubules. May play a role in changing or maintaining the spatial distribution of cytoskeletal structures. Also a component of the nuclear pore complex. The chain is Dynein light chain, cytoplasmic (nudG) from Emericella nidulans (strain FGSC A4 / ATCC 38163 / CBS 112.46 / NRRL 194 / M139) (Aspergillus nidulans).